Reading from the N-terminus, the 242-residue chain is Probable transcriptional regulatory protein Bmul_0984/BMULJ_02280 (242 aa).

The protein belongs to the TACO1 family.

It is found in the cytoplasm. The chain is Probable transcriptional regulatory protein Bmul_0984/BMULJ_02280 from Burkholderia multivorans (strain ATCC 17616 / 249).